Consider the following 80-residue polypeptide: Cytochrome c oxidase subunit 7A1, mitochondrial (80 aa).

Residues 1 to 21 constitute a mitochondrion transit peptide; it reads MRALRVSQALVRSFSSSTRSH. At 22-46 the chain is on the mitochondrial matrix side; the sequence is LENRVAEKQKLFQADNDLPVHLKGG. The chain crosses the membrane as a helical span at residues 47–75; sequence GMDNVLYRLTMTLTLGGTAYCLYCLGWAS. The Mitochondrial intermembrane segment spans residues 76-80; the sequence is FPHKK.

It belongs to the cytochrome c oxidase VIIa family. As to quaternary structure, component of the complex IV (CIV, cytochrome c oxidase), a multisubunit enzyme composed of 14 subunits. The complex is composed of a catalytic core of 3 subunits MT-CO1, MT-CO2 and MT-CO3, encoded in the mitochondrial DNA, and 11 supernumerary subunits COX4I, COX5A, COX5B, COX6A, COX6B, COX6C, COX7A, COX7B, COX7C, COX8 and NDUFA4, which are encoded in the nuclear genome. The complex exists as a monomer or a dimer and forms supercomplexes (SCs) in the inner mitochondrial membrane with NADH-ubiquinone oxidoreductase (complex I, CI) and ubiquinol-cytochrome c oxidoreductase (cytochrome b-c1 complex, complex III, CIII), resulting in different assemblies (supercomplex SCI(1)III(2)IV(1) and megacomplex MCI(2)III(2)IV(2)).

The protein localises to the mitochondrion inner membrane. Its pathway is energy metabolism; oxidative phosphorylation. Component of the mitochondrial respiratory complex IV (CIV, also named cytochrome c oxidase complex), the last enzyme in the mitochondrial electron transport chain which drives oxidative phosphorylation. The CIV complex is the component of the respiratory chain that catalyzes the reduction of oxygen to water. Acts as an assembly factor that specifically drives the homodimerization of CIV complexes, mediating the formation of mitochondrial respiratory supercomplexes (respirasomes) containing two CIV: supercomplxes with two molecules of CIV show improved activity. Despite being highly expressed in brown adipose tissue, not required for thermogenesis. The polypeptide is Cytochrome c oxidase subunit 7A1, mitochondrial (Mus musculus (Mouse)).